Here is a 327-residue protein sequence, read N- to C-terminus: Eukaryotic translation initiation factor 3 subunit I (327 aa).

WD repeat units lie at residues 8–47 (GHQRAITQIKYNREGDLIFSSAKDSKPSVWYSLNGERLGT), 50–89 (GHIGAVWCVDVDWTTTRLITGAGDMNTFLWDVETGTALGK), 147–186 (EQQSKITSMLWGALDETVITGHENGSLRIWDLRAVKELNS), 189–228 (DHTASITDMQMSSDGTMFVSSSKDCSAKLFDSDSLMCLKT), and 286–327 (GHFG…HTFE).

Belongs to the eIF-3 subunit I family. Component of the eukaryotic translation initiation factor 3 (eIF-3) complex.

Its subcellular location is the cytoplasm. Functionally, component of the eukaryotic translation initiation factor 3 (eIF-3) complex, which is involved in protein synthesis of a specialized repertoire of mRNAs and, together with other initiation factors, stimulates binding of mRNA and methionyl-tRNAi to the 40S ribosome. The eIF-3 complex specifically targets and initiates translation of a subset of mRNAs involved in cell proliferation. This is Eukaryotic translation initiation factor 3 subunit I from Anopheles gambiae (African malaria mosquito).